A 97-amino-acid chain; its full sequence is NADH dehydrogenase [ubiquinone] 1 alpha subcomplex subunit 2 (97 aa).

A disulfide bond links C19 and C53.

Belongs to the complex I NDUFA2 subunit family. Complex I is composed of at least 49 different subunits.

Its subcellular location is the mitochondrion inner membrane. Its function is as follows. Accessory subunit of the mitochondrial membrane respiratory chain NADH dehydrogenase (Complex I), that is believed not to be involved in catalysis. Complex I functions in the transfer of electrons from NADH to the respiratory chain. The immediate electron acceptor for the enzyme is believed to be ubiquinone. This is NADH dehydrogenase [ubiquinone] 1 alpha subcomplex subunit 2 from Arabidopsis thaliana (Mouse-ear cress).